Here is a 99-residue protein sequence, read N- to C-terminus: Large ribosomal subunit protein uL23 (99 aa).

This sequence belongs to the universal ribosomal protein uL23 family. Part of the 50S ribosomal subunit. Contacts protein L29, and trigger factor when it is bound to the ribosome.

Functionally, one of the early assembly proteins it binds 23S rRNA. One of the proteins that surrounds the polypeptide exit tunnel on the outside of the ribosome. Forms the main docking site for trigger factor binding to the ribosome. The protein is Large ribosomal subunit protein uL23 of Rhodopseudomonas palustris (strain BisB5).